The sequence spans 158 residues: MVEKVPMTPGGFVKLQEELRWRQQEERPRIIEAIAEARAHGDLSENAEYHAAKEAQSHNEGRISELEDLTARAEVIDLTKMSGDKIKFGAKVKLVDEDTEEEKTYQIVGDQEADVKAGRISISSPIARALIGKEVGDSIEVNAPGGSKAYEILQVSWG.

The protein belongs to the GreA/GreB family.

Its function is as follows. Necessary for efficient RNA polymerase transcription elongation past template-encoded arresting sites. The arresting sites in DNA have the property of trapping a certain fraction of elongating RNA polymerases that pass through, resulting in locked ternary complexes. Cleavage of the nascent transcript by cleavage factors such as GreA or GreB allows the resumption of elongation from the new 3'terminus. GreA releases sequences of 2 to 3 nucleotides. This is Transcription elongation factor GreA from Rhizobium leguminosarum bv. trifolii (strain WSM2304).